We begin with the raw amino-acid sequence, 425 residues long: Isocitrate dehydrogenase [NADP] (425 aa).

Thr-114 contributes to the NADP(+) binding site. D-threo-isocitrate contacts are provided by Ser-123, Asn-125, Arg-129, Arg-139, and Arg-162. Asp-316 serves as a coordination point for Mg(2+). NADP(+) contacts are provided by residues 348-354, Asn-361, Tyr-400, and Arg-404; that span reads HGTAPKY.

This sequence belongs to the isocitrate and isopropylmalate dehydrogenases family. As to quaternary structure, homodimer. The cofactor is Mg(2+). It depends on Mn(2+) as a cofactor.

It carries out the reaction D-threo-isocitrate + NADP(+) = 2-oxoglutarate + CO2 + NADPH. Functionally, catalyzes the oxidative decarboxylation of isocitrate to 2-oxoglutarate and carbon dioxide with the concomitant reduction of NADP(+). The protein is Isocitrate dehydrogenase [NADP] (icd) of Helicobacter pylori (strain J99 / ATCC 700824) (Campylobacter pylori J99).